A 407-amino-acid chain; its full sequence is Phosphopentomutase (407 aa).

Mn(2+) contacts are provided by Asp-10, Asp-306, His-311, Asp-347, His-348, and His-359.

This sequence belongs to the phosphopentomutase family. Mn(2+) serves as cofactor.

Its subcellular location is the cytoplasm. The catalysed reaction is 2-deoxy-alpha-D-ribose 1-phosphate = 2-deoxy-D-ribose 5-phosphate. It catalyses the reaction alpha-D-ribose 1-phosphate = D-ribose 5-phosphate. The protein operates within carbohydrate degradation; 2-deoxy-D-ribose 1-phosphate degradation; D-glyceraldehyde 3-phosphate and acetaldehyde from 2-deoxy-alpha-D-ribose 1-phosphate: step 1/2. Functionally, isomerase that catalyzes the conversion of deoxy-ribose 1-phosphate (dRib-1-P) and ribose 1-phosphate (Rib-1-P) to deoxy-ribose 5-phosphate (dRib-5-P) and ribose 5-phosphate (Rib-5-P), respectively. The chain is Phosphopentomutase from Erwinia tasmaniensis (strain DSM 17950 / CFBP 7177 / CIP 109463 / NCPPB 4357 / Et1/99).